Reading from the N-terminus, the 504-residue chain is MTLYLDGETLTIEYIKSFLQQQSKIEIIDDALERVKKSRAVVERIIENEETVYGITTGFGLFSDVRIDPTQYNELQMNLIRSHACGLGEPFSKEVALVMMILRLNTLLKGHSGATLELVRQLQFFINERIIPIIPQQGSLGASGDLAPLSHLALALIGEGKVLYRGEEKDSDDVLRELNRQPLNLQAKEGLALINGTQAMTAQGVISYIEAEDLGYQSEWIAALTHQSLNGIIDAYRHDVHAVRNFQEQINVAARMRDWLEGSTLTTRQAEIRVQDAYTLRCIPQIHGASFQVFNYVKQQLEFEMNAANDNPLIFEEANATFVISGGNFHGQPIAFALDHLKLGVSELANVSERRLERLVNPQLNGDLPAFLSPEPGLQSGAMIMQYAAASLVSENKTLAHPASVDSITSSANQEDHVSMGTTAARHGYQIIENARRVLAIECVIALQAAELKGVEGLSPKTRRKYDEFRSIVPSITYDRQFHKDIEAVAQYLKQSIYQTTACH.

The segment at residues 142-144 (ASG) is a cross-link (5-imidazolinone (Ala-Gly)). The residue at position 143 (Ser-143) is a 2,3-didehydroalanine (Ser).

This sequence belongs to the PAL/histidase family. Post-translationally, contains an active site 4-methylidene-imidazol-5-one (MIO), which is formed autocatalytically by cyclization and dehydration of residues Ala-Ser-Gly.

The protein localises to the cytoplasm. It carries out the reaction L-histidine = trans-urocanate + NH4(+). It functions in the pathway amino-acid degradation; L-histidine degradation into L-glutamate; N-formimidoyl-L-glutamate from L-histidine: step 1/3. This is Histidine ammonia-lyase from Staphylococcus aureus (strain MRSA252).